The chain runs to 494 residues: Inositol-trisphosphate 3-kinase homolog (494 aa).

Residues Ser206, Lys218, 260–262 (EDL), and Asp276 contribute to the ATP site. Residues Lys278 and 322–329 (KLRYMQFR) contribute to the substrate site. Lys346 and Asp426 together coordinate ATP. Position 429 (Lys429) interacts with substrate.

It belongs to the inositol phosphokinase (IPK) family. As to expression, expressed in spermatheca.

It catalyses the reaction 1D-myo-inositol 1,4,5-trisphosphate + ATP = 1D-myo-inositol 1,3,4,5-tetrakisphosphate + ADP + H(+). Unlike mammalian IP3K, may not be regulated by calmodulin. Probably by regulating inositol 1,4,5-trisphosphate levels, negatively regulates posterior body wall muscle contractions required for defecation and let-23 signaling pathway that controls spermathecal dilation and ovulation. May also regulate ovulation downstream of actin cross-linker fln-1. This is Inositol-trisphosphate 3-kinase homolog from Caenorhabditis elegans.